Consider the following 113-residue polypeptide: U11-theraphotoxin-Hhn1a (113 aa).

Positions 1–21 (MNTVRVTFLLVFVLAVSLGQA) are cleaved as a signal peptide. Residues 22-74 (DKDENRMEMQEKTEQGKSYLDFAENLLLQKLEELEAKLPEEDSEESRNSRQKR) constitute a propeptide that is removed on maturation. Over residues 58-69 (KLPEEDSEESRN) the composition is skewed to basic and acidic residues. The tract at residues 58–82 (KLPEEDSEESRNSRQKRCIGEGVPC) is disordered. Cystine bridges form between Cys75–Cys90, Cys82–Cys95, and Cys89–Cys110.

This sequence belongs to the neurotoxin 14 (magi-1) family. 01 (HNTX-16) subfamily. As to expression, expressed by the venom gland.

The protein localises to the secreted. Probable ion channel inhibitor. In Cyriopagopus hainanus (Chinese bird spider), this protein is U11-theraphotoxin-Hhn1a.